The sequence spans 869 residues: MTATPADRPDPGVAGDADWAAEARPLLVHADMRLCKRFDQGEPTERLLALRARAVDQLMRNAWTRCIPADAGLSLHAVGGYGRGELFPRSDVDLLVLGETAAQQRHEQALARLFALLWDVGLPISHAVRSPAQCTSAAADQTVLTALIESRPLVADAQARAALAAAIAPQQVWPPRAFFQAKREELHARHQRFGDTADNLEPDIKDGPGGLRDLQTLGWMALRAFGVKDLEALVGLGHVGMDEAAALRREREELARLRYGLHLVANRPEERLRFDYQKTLAERLGFADDPESLGVEKMMQRFYRSAALIRRISDRLLQRFEEQFDGEAVPVQLDAGFSLRRGYLTADADTWPDGDVVQVFALFAQWAAHREVRGLHSLTARALAEVLRDLPAYDVADAIARDRFMALLRGPRAVETLNRMARLGVLGQWIPAFASVSGRMQFDLFHVYTVDQHTLMVLRNIALFAAGRADERFSITHEVWPRLRKPELLLLAGLFHDIAKGRGGDHSELGAVDARAFCLAHRLSEGDTELVTWLVEQHLRMSVTAQKQDISDPEVIHRFATLVGTRERLDYLYLLTCADIAGTSPKLWNAWKDRLLADLYFAARRALREGLEHPPPREERLREARESARTLMQAQGHDDATIDRQFAGMPDENFLRFRPEQLAWQAASLIEVQIGQTLVKARRAVPDNDALEVFVYSPDRDGLFSAIVATLDRKGYGIHRARVLDAPHDAIFDVFEVLPQDSSADGDPQRLAAALRQVLAGDLLKVRPSRRAVPRQLRHFRFAPRVEFSESAGGRRTRISLVAPDRPGLLADVAHVLRMQHLRVHDARIATFGERAEDQFQITDEHDRPLPDAARQALRDALCACLDPT.

Residues 1–332 (MTATPADRPD…QFDGEAVPVQ (332 aa)) are uridylyltransferase. Positions 333 to 691 (LDAGFSLRRG…RRAVPDNDAL (359 aa)) are uridylyl-removing. Positions 450–572 (VDQHTLMVLR…VGTRERLDYL (123 aa)) constitute an HD domain. ACT domains lie at 692–771 (EVFV…PSRR) and 798–869 (RISL…LDPT).

This sequence belongs to the GlnD family. It depends on Mg(2+) as a cofactor.

It carries out the reaction [protein-PII]-L-tyrosine + UTP = [protein-PII]-uridylyl-L-tyrosine + diphosphate. The catalysed reaction is [protein-PII]-uridylyl-L-tyrosine + H2O = [protein-PII]-L-tyrosine + UMP + H(+). With respect to regulation, uridylyltransferase (UTase) activity is inhibited by glutamine, while glutamine activates uridylyl-removing (UR) activity. Functionally, modifies, by uridylylation and deuridylylation, the PII regulatory proteins (GlnB and homologs), in response to the nitrogen status of the cell that GlnD senses through the glutamine level. Under low glutamine levels, catalyzes the conversion of the PII proteins and UTP to PII-UMP and PPi, while under higher glutamine levels, GlnD hydrolyzes PII-UMP to PII and UMP (deuridylylation). Thus, controls uridylylation state and activity of the PII proteins, and plays an important role in the regulation of nitrogen assimilation and metabolism. This chain is Bifunctional uridylyltransferase/uridylyl-removing enzyme, found in Xanthomonas campestris pv. campestris (strain 8004).